Consider the following 288-residue polypeptide: Heme oxygenase 1 (288 aa).

The Cytoplasmic segment spans residues 1-265 (MERPQPDSMP…KPPLNTRSQA (265 aa)). Heme b-binding residues include Lys18, His25, Tyr134, and Arg183. A disordered region spans residues 223-260 (HDTKDQSPSRAPGLRQRASNKVQDSAPVETPRGKPPLN). Ser229 carries the phosphoserine modification. The helical; Anchor for type IV membrane protein transmembrane segment at 266–288 (PLLRWVLTLSFLVATVAVGLYAM) threads the bilayer.

This sequence belongs to the heme oxygenase family. In terms of assembly, (Microbial infection) Interacts with SARS-CoV-2 ORF3A protein; the interaction promotes ORF3A-induced autophagy but is unlikely to be involved in ORF3A-mediated induction of reticulophagy. As to quaternary structure, homodimer and higher order homooligomer. Oligomerization is crucial for its stability and function in the endoplasmic reticulum. Interacts with FLVCR2; this interaction is potentiated in the presence of heme. In terms of processing, a soluble form arises by proteolytic removal of the membrane anchor. In terms of tissue distribution, expressed at higher levels in renal cancer tissue than in normal tissue (at protein level).

The protein resides in the endoplasmic reticulum membrane. The enzyme catalyses heme b + 3 reduced [NADPH--hemoprotein reductase] + 3 O2 = biliverdin IXalpha + CO + Fe(2+) + 3 oxidized [NADPH--hemoprotein reductase] + 3 H2O + H(+). Its function is as follows. Catalyzes the oxidative cleavage of heme at the alpha-methene bridge carbon, released as carbon monoxide (CO), to generate biliverdin IXalpha, while releasing the central heme iron chelate as ferrous iron. Affords protection against programmed cell death and this cytoprotective effect relies on its ability to catabolize free heme and prevent it from sensitizing cells to undergo apoptosis. In terms of biological role, (Microbial infection) During SARS-COV-2 infection, promotes SARS-CoV-2 ORF3A-mediated autophagy but is unlikely to be required for ORF3A-mediated induction of reticulophagy. Catalyzes the oxidative cleavage of heme at the alpha-methene bridge carbon, released as carbon monoxide (CO), to generate biliverdin IXalpha, while releasing the central heme iron chelate as ferrous iron. In Homo sapiens (Human), this protein is Heme oxygenase 1 (HMOX1).